The chain runs to 600 residues: Putative dehydrogenase XoxF (600 aa).

The N-terminal stretch at 1–21 (MKNLMNGACLALLMSGTAALA) is a signal peptide. Ca(2+) contacts are provided by Glu192 and Asn276. The active-site Proton acceptor is Asp318.

Belongs to the bacterial PQQ dehydrogenase family. It depends on pyrroloquinoline quinone as a cofactor. Ca(2+) serves as cofactor.

The chain is Putative dehydrogenase XoxF (xoxF) from Paracoccus denitrificans.